The following is a 51-amino-acid chain: Large ribosomal subunit protein eL39 (51 aa).

Residues 1 to 15 (MPSHKSFRTKQKLAK) show a composition bias toward basic residues. The interval 1-21 (MPSHKSFRTKQKLAKAARQNR) is disordered.

The protein belongs to the eukaryotic ribosomal protein eL39 family. As to quaternary structure, component of the large ribosomal subunit (LSU). Mature yeast ribosomes consist of a small (40S) and a large (60S) subunit. The 40S small subunit contains 1 molecule of ribosomal RNA (18S rRNA) and at least 33 different proteins. The large 60S subunit contains 3 rRNA molecules (25S, 5.8S and 5S rRNA) and at least 46 different proteins. eL39 interacts with yih1.

The protein localises to the cytoplasm. Component of the ribosome, a large ribonucleoprotein complex responsible for the synthesis of proteins in the cell. The small ribosomal subunit (SSU) binds messenger RNAs (mRNAs) and translates the encoded message by selecting cognate aminoacyl-transfer RNA (tRNA) molecules. The large subunit (LSU) contains the ribosomal catalytic site termed the peptidyl transferase center (PTC), which catalyzes the formation of peptide bonds, thereby polymerizing the amino acids delivered by tRNAs into a polypeptide chain. The nascent polypeptides leave the ribosome through a tunnel in the LSU and interact with protein factors that function in enzymatic processing, targeting, and the membrane insertion of nascent chains at the exit of the ribosomal tunnel. The protein is Large ribosomal subunit protein eL39 (rpl39) of Schizosaccharomyces pombe (strain 972 / ATCC 24843) (Fission yeast).